Consider the following 299-residue polypeptide: MRNELLDFLEFLKGEKNLSHYTVDNYYKDLTQAENFFNEQFELYQWDEVTHKHIRHFLAYLKDKNYEKSTTARKLSAIRSLFKFLTREEKIRSNTSALLATPKKERKLPEFLSIEEVEMLINAPGDDPFGLRDKAILEVFYCSGIRLGELWGLDLQNLDLQTGYLKVTGKGNIERLAPLGSFALAAIEDYLYNARPELLKKNKSVENCDALFLNKFGTRISQRSIRRRVKKYVQQTASEHRVSPHSLRHSFATHLLEGGADLRAVQELLGHVNISTTQIYTHVNQARMTEVYNKYHPRA.

The Core-binding (CB) domain occupies 1-86; the sequence is MRNELLDFLE…AIRSLFKFLT (86 aa). Residues 107–293 form the Tyr recombinase domain; the sequence is KLPEFLSIEE…NQARMTEVYN (187 aa). Catalysis depends on residues R146, K170, H245, R248, and H271. The active-site O-(3'-phospho-DNA)-tyrosine intermediate is the Y280.

It belongs to the 'phage' integrase family. XerC subfamily. Forms a cyclic heterotetrameric complex composed of two molecules of XerC and two molecules of XerD.

It is found in the cytoplasm. Its function is as follows. Site-specific tyrosine recombinase, which acts by catalyzing the cutting and rejoining of the recombining DNA molecules. The XerC-XerD complex is essential to convert dimers of the bacterial chromosome into monomers to permit their segregation at cell division. It also contributes to the segregational stability of plasmids. This Natranaerobius thermophilus (strain ATCC BAA-1301 / DSM 18059 / JW/NM-WN-LF) protein is Tyrosine recombinase XerC.